A 272-amino-acid chain; its full sequence is ATP synthase subunit a (272 aa).

Helical transmembrane passes span 41 to 61 (VLNI…LVLF), 101 to 121 (VIAP…FMDL), 147 to 167 (DVNI…FYSI), 221 to 241 (LIFI…LSVP), and 243 to 263 (AIFH…LTIV).

It belongs to the ATPase A chain family. F-type ATPases have 2 components, CF(1) - the catalytic core - and CF(0) - the membrane proton channel. CF(1) has five subunits: alpha(3), beta(3), gamma(1), delta(1), epsilon(1). CF(0) has three main subunits: a(1), b(2) and c(9-12). The alpha and beta chains form an alternating ring which encloses part of the gamma chain. CF(1) is attached to CF(0) by a central stalk formed by the gamma and epsilon chains, while a peripheral stalk is formed by the delta and b chains.

The protein resides in the cell inner membrane. Its function is as follows. Key component of the proton channel; it plays a direct role in the translocation of protons across the membrane. The sequence is that of ATP synthase subunit a from Erwinia tasmaniensis (strain DSM 17950 / CFBP 7177 / CIP 109463 / NCPPB 4357 / Et1/99).